The chain runs to 553 residues: Dihydroxy-acid dehydratase (553 aa).

Residue Asp-78 coordinates Mg(2+). Cys-119 is a binding site for [2Fe-2S] cluster. Residues Asp-120 and Lys-121 each coordinate Mg(2+). Residue Lys-121 is modified to N6-carboxylysine. [2Fe-2S] cluster is bound at residue Cys-191. Position 444 (Glu-444) interacts with Mg(2+). The active-site Proton acceptor is the Ser-470.

It belongs to the IlvD/Edd family. As to quaternary structure, homodimer. [2Fe-2S] cluster serves as cofactor. The cofactor is Mg(2+).

The catalysed reaction is (2R)-2,3-dihydroxy-3-methylbutanoate = 3-methyl-2-oxobutanoate + H2O. It catalyses the reaction (2R,3R)-2,3-dihydroxy-3-methylpentanoate = (S)-3-methyl-2-oxopentanoate + H2O. The protein operates within amino-acid biosynthesis; L-isoleucine biosynthesis; L-isoleucine from 2-oxobutanoate: step 3/4. It functions in the pathway amino-acid biosynthesis; L-valine biosynthesis; L-valine from pyruvate: step 3/4. Functions in the biosynthesis of branched-chain amino acids. Catalyzes the dehydration of (2R,3R)-2,3-dihydroxy-3-methylpentanoate (2,3-dihydroxy-3-methylvalerate) into 2-oxo-3-methylpentanoate (2-oxo-3-methylvalerate) and of (2R)-2,3-dihydroxy-3-methylbutanoate (2,3-dihydroxyisovalerate) into 2-oxo-3-methylbutanoate (2-oxoisovalerate), the penultimate precursor to L-isoleucine and L-valine, respectively. The protein is Dihydroxy-acid dehydratase of Methanosarcina barkeri (strain Fusaro / DSM 804).